Reading from the N-terminus, the 350-residue chain is Protein pelota homolog (350 aa).

It belongs to the eukaryotic release factor 1 family. Pelota subfamily. Monomer. A divalent metal cation serves as cofactor.

It localises to the cytoplasm. Its function is as follows. May function in recognizing stalled ribosomes, interact with stem-loop structures in stalled mRNA molecules, and effect endonucleolytic cleavage of the mRNA. May play a role in the release non-functional ribosomes and degradation of damaged mRNAs. Has endoribonuclease activity. The sequence is that of Protein pelota homolog from Methanosarcina barkeri (strain Fusaro / DSM 804).